The primary structure comprises 176 residues: Transcription termination/antitermination protein NusG (176 aa).

The KOW domain maps to glycine 125 to histidine 149.

It belongs to the NusG family.

Participates in transcription elongation, termination and antitermination. The polypeptide is Transcription termination/antitermination protein NusG (Helicobacter pylori (strain J99 / ATCC 700824) (Campylobacter pylori J99)).